The sequence spans 511 residues: Maturase K (511 aa).

Belongs to the intron maturase 2 family. MatK subfamily.

It is found in the plastid. The protein localises to the chloroplast. In terms of biological role, usually encoded in the trnK tRNA gene intron. Probably assists in splicing its own and other chloroplast group II introns. This chain is Maturase K, found in Bowiea volubilis (Climbing onion).